The following is a 161-amino-acid chain: MASTKPTDQIKQLKDIFARFDMDKDGSLTQLELAALLRSLGIKPRGDQISLLLNQIDRNGNGSVEFDELVVAILPDINEEVLINQEQLMEVFRSFDRDGNGSITAAELAGSMAKMGHPLTYRELTEMMTEADSNGDGVISFNEFSHIMAKSAADFLGLTAS.

EF-hand domains lie at 8–43 (DQIK…LGIK), 44–79 (PRGD…DINE), 83–118 (INQE…MGHP), and 119–154 (LTYR…SAAD). Positions 21, 23, 25, 27, 32, 57, 59, 61, 63, 68, 96, 98, 100, 102, 107, 132, 134, 136, and 143 each coordinate Ca(2+).

Potential calcium sensor. This chain is Probable calcium-binding protein CML16 (CML16), found in Arabidopsis thaliana (Mouse-ear cress).